Consider the following 339-residue polypeptide: Ketol-acid reductoisomerase (NADP(+)) (339 aa).

Positions 1–182 (MRVYYDRDAD…GGGRSGIIET (182 aa)) constitute a KARI N-terminal Rossmann domain. Residues 24–27 (YGSQ), arginine 48, serine 51, threonine 53, and 83–86 (DEHQ) contribute to the NADP(+) site. Histidine 108 is an active-site residue. Glycine 134 is a binding site for NADP(+). Residues 183–328 (NFREECETDL…ARLRGMMPWI (146 aa)) form the KARI C-terminal knotted domain. 4 residues coordinate Mg(2+): aspartate 191, glutamate 195, glutamate 227, and glutamate 231. Serine 252 provides a ligand contact to substrate.

Belongs to the ketol-acid reductoisomerase family. Mg(2+) serves as cofactor.

It catalyses the reaction (2R)-2,3-dihydroxy-3-methylbutanoate + NADP(+) = (2S)-2-acetolactate + NADPH + H(+). It carries out the reaction (2R,3R)-2,3-dihydroxy-3-methylpentanoate + NADP(+) = (S)-2-ethyl-2-hydroxy-3-oxobutanoate + NADPH + H(+). Its pathway is amino-acid biosynthesis; L-isoleucine biosynthesis; L-isoleucine from 2-oxobutanoate: step 2/4. The protein operates within amino-acid biosynthesis; L-valine biosynthesis; L-valine from pyruvate: step 2/4. Its function is as follows. Involved in the biosynthesis of branched-chain amino acids (BCAA). Catalyzes an alkyl-migration followed by a ketol-acid reduction of (S)-2-acetolactate (S2AL) to yield (R)-2,3-dihydroxy-isovalerate. In the isomerase reaction, S2AL is rearranged via a Mg-dependent methyl migration to produce 3-hydroxy-3-methyl-2-ketobutyrate (HMKB). In the reductase reaction, this 2-ketoacid undergoes a metal-dependent reduction by NADPH to yield (R)-2,3-dihydroxy-isovalerate. The protein is Ketol-acid reductoisomerase (NADP(+)) of Caulobacter sp. (strain K31).